Reading from the N-terminus, the 117-residue chain is Large ribosomal subunit protein uL18 (117 aa).

Belongs to the universal ribosomal protein uL18 family. Part of the 50S ribosomal subunit; part of the 5S rRNA/L5/L18/L25 subcomplex. Contacts the 5S and 23S rRNAs.

This is one of the proteins that bind and probably mediate the attachment of the 5S RNA into the large ribosomal subunit, where it forms part of the central protuberance. This is Large ribosomal subunit protein uL18 from Blochmanniella pennsylvanica (strain BPEN).